Consider the following 146-residue polypeptide: MGEDGKLYIVREEILSDSIKKTIKVKELLESGKAKTINEAVKQVGISRSAFYKYRDYVFPFSKFSKGKIITFSMVLEHMPGVLSSILDVVAKERGNVVTINQSIPSMGVASVTISIDTQYMEISIEDFIEELSKQPGVRKIEVLGE.

The ACT domain occupies 71-146 (TFSMVLEHMP…GVRKIEVLGE (76 aa)).

The protein belongs to the UPF0735 family.

The chain is UPF0735 ACT domain-containing protein TTE2621 from Caldanaerobacter subterraneus subsp. tengcongensis (strain DSM 15242 / JCM 11007 / NBRC 100824 / MB4) (Thermoanaerobacter tengcongensis).